Consider the following 153-residue polypeptide: Large ribosomal subunit protein uL13 (153 aa).

Belongs to the universal ribosomal protein uL13 family. In terms of assembly, part of the 50S ribosomal subunit.

Functionally, this protein is one of the early assembly proteins of the 50S ribosomal subunit, although it is not seen to bind rRNA by itself. It is important during the early stages of 50S assembly. This is Large ribosomal subunit protein uL13 from Azorhizobium caulinodans (strain ATCC 43989 / DSM 5975 / JCM 20966 / LMG 6465 / NBRC 14845 / NCIMB 13405 / ORS 571).